The primary structure comprises 341 residues: Cell division protein FtsQ (341 aa).

Residues 1-126 (MTETDEGAPV…VARGVVRGLK (126 aa)) lie on the Cytoplasmic side of the membrane. Residues 127–147 (TLFATVMFSIAGFGLGLALYV) form a helical membrane-spanning segment. Residues 148 to 341 (TPAMSVRNIV…VSSPDLPTVK (194 aa)) are Extracellular-facing. One can recognise a POTRA domain in the interval 151–219 (MSVRNIVVTG…SALRITIVER (69 aa)).

Belongs to the FtsQ/DivIB family. FtsQ subfamily.

The protein localises to the cell membrane. Functionally, essential cell division protein. The polypeptide is Cell division protein FtsQ (Mycobacterium leprae (strain Br4923)).